Reading from the N-terminus, the 98-residue chain is NADH-ubiquinone oxidoreductase chain 4L (98 aa).

The next 3 membrane-spanning stretches (helical) occupy residues 1-21, 29-49, and 61-81; these read MHYI…GALL, SLLC…LIAL, and IILL…LVMV.

The protein belongs to the complex I subunit 4L family. Core subunit of respiratory chain NADH dehydrogenase (Complex I) which is composed of 45 different subunits.

The protein localises to the mitochondrion inner membrane. The catalysed reaction is a ubiquinone + NADH + 5 H(+)(in) = a ubiquinol + NAD(+) + 4 H(+)(out). Core subunit of the mitochondrial membrane respiratory chain NADH dehydrogenase (Complex I) which catalyzes electron transfer from NADH through the respiratory chain, using ubiquinone as an electron acceptor. Part of the enzyme membrane arm which is embedded in the lipid bilayer and involved in proton translocation. In Procavia capensis (Rock hyrax), this protein is NADH-ubiquinone oxidoreductase chain 4L (MT-ND4L).